The following is a 191-amino-acid chain: Fe/S biogenesis protein NfuA (191 aa).

Cysteine 149 and cysteine 152 together coordinate [4Fe-4S] cluster.

Belongs to the NfuA family. In terms of assembly, homodimer. [4Fe-4S] cluster is required as a cofactor.

In terms of biological role, involved in iron-sulfur cluster biogenesis. Binds a 4Fe-4S cluster, can transfer this cluster to apoproteins, and thereby intervenes in the maturation of Fe/S proteins. Could also act as a scaffold/chaperone for damaged Fe/S proteins. This chain is Fe/S biogenesis protein NfuA, found in Edwardsiella ictaluri (strain 93-146).